Reading from the N-terminus, the 485-residue chain is Cobyric acid synthase (485 aa).

The 187-residue stretch at 250–436 (RRIVACPILP…IHGLLASPAL (187 aa)) folds into the GATase cobBQ-type domain. Cys-332 acts as the Nucleophile in catalysis. Residue His-428 is part of the active site.

Belongs to the CobB/CobQ family. CobQ subfamily.

Its pathway is cofactor biosynthesis; adenosylcobalamin biosynthesis. In terms of biological role, catalyzes amidations at positions B, D, E, and G on adenosylcobyrinic A,C-diamide. NH(2) groups are provided by glutamine, and one molecule of ATP is hydrogenolyzed for each amidation. In Sphingopyxis alaskensis (strain DSM 13593 / LMG 18877 / RB2256) (Sphingomonas alaskensis), this protein is Cobyric acid synthase.